The chain runs to 117 residues: Hainantoxin-XV-2 (117 aa).

A signal peptide spans 1–20 (MKLCAVIIASLLVCVAVASS). Residues 20–55 (SSDNQKEFAQEKEMTREETQSLGEHEKDDEVTGSEE) form a disordered region. The propeptide occupies 21–56 (SDNQKEFAQEKEMTREETQSLGEHEKDDEVTGSEER). Residues 23-55 (NQKEFAQEKEMTREETQSLGEHEKDDEVTGSEE) are compositionally biased toward basic and acidic residues. 4 disulfide bridges follow: C58–C72, C65–C78, C69–C115, and C71–C91.

Belongs to the neurotoxin 03 (Tx2) family. 02 subfamily. HNTX-XV sub-subfamily. As to expression, expressed by the venom gland.

The protein localises to the secreted. Putative ion channel inhibitor. The sequence is that of Hainantoxin-XV-2 from Cyriopagopus hainanus (Chinese bird spider).